A 239-amino-acid polypeptide reads, in one-letter code: Adapter protein MecA (239 aa).

The segment covering 118 to 128 (EQRTKEKEAQG) has biased composition (basic and acidic residues). A disordered region spans residues 118–137 (EQRTKEKEAQGSKRQKSSAR).

Belongs to the MecA family. As to quaternary structure, homodimer.

In terms of biological role, enables the recognition and targeting of unfolded and aggregated proteins to the ClpC protease or to other proteins involved in proteolysis. This is Adapter protein MecA from Staphylococcus aureus (strain USA300).